We begin with the raw amino-acid sequence, 77 residues long: Spermatid-specific protein T2 (77 aa).

The interval 1–21 (MKVAANTSKMLVEKLDLLKGG) is hydrophobic. Residues 1-77 (MKVAANTSKM…YSRRRYRRRR (77 aa)) form a disordered region. Over residues 20–77 (GGRRRRRRSRRRRRSRRRRSRSPYRRRYRRRRRRRRSRRRRRYRRRRSYSRRRYRRRR) the composition is skewed to basic residues.

Post-translationally, phosphorylation occurs at different degrees. The triphosphorylated form may be predominant in T2. SP2 appears to be phosphorylated in elongated spermatids, but dephosphorylated in mature sperm cells. In terms of tissue distribution, testis.

It localises to the nucleus. Its subcellular location is the chromosome. Its function is as follows. Cuttlefish spermiogenesis is characterized by a double nuclear protein transition: histones -&gt; spermatid-specific proteins (T1/T2) -&gt; protamines (SP1/SP2). The protamines compact sperm DNA into a highly condensed, stable and inactive complex. The protein is Spermatid-specific protein T2 of Sepia officinalis (Common cuttlefish).